The following is a 231-amino-acid chain: Regulatory protein VanR (231 aa).

In terms of domain architecture, Response regulatory spans 4–117; sequence KILIVDDEHE…ELIARVKAQL (114 aa). Aspartate 53 carries the post-translational modification 4-aspartylphosphate. A DNA-binding region (ompR/PhoB-type) is located at residues 131–231; the sequence is ENVIVHSGLV…VWGVGYKIEK (101 aa).

In terms of assembly, monomer. Post-translationally, phosphorylated by VanS. Dephosphorylated by VanS. Can be phosphorylated nonenzymatically by acetyl-phosphate.

It is found in the cytoplasm. Member of the two-component regulatory system VanS/VanR. Binds to the promoter regions of target genes, including vanH and vanR; phosphorylation of VanR increases binding affinity to the vanH and vanR promoters significantly. DNA binding may be inhibited by the cognate sensor protein, VanS. Activates the transcription of vanH, vanA and vanX in response to vancomycin which results in vancomycin resistance. Involved in conferring vancomycin resistance. The protein is Regulatory protein VanR (vanR) of Enterococcus faecium (Streptococcus faecium).